We begin with the raw amino-acid sequence, 89 residues long: Exodeoxyribonuclease 7 small subunit (89 aa).

Belongs to the XseB family. In terms of assembly, heterooligomer composed of large and small subunits.

Its subcellular location is the cytoplasm. It catalyses the reaction Exonucleolytic cleavage in either 5'- to 3'- or 3'- to 5'-direction to yield nucleoside 5'-phosphates.. In terms of biological role, bidirectionally degrades single-stranded DNA into large acid-insoluble oligonucleotides, which are then degraded further into small acid-soluble oligonucleotides. The chain is Exodeoxyribonuclease 7 small subunit from Chlorobium phaeobacteroides (strain DSM 266 / SMG 266 / 2430).